Here is a 206-residue protein sequence, read N- to C-terminus: Outer-membrane lipoprotein carrier protein (206 aa).

The signal sequence occupies residues 1–20 (MFYLIKKLPKFILFSLYLYA).

Belongs to the LolA family. Monomer.

It is found in the periplasm. Functionally, participates in the translocation of lipoproteins from the inner membrane to the outer membrane. Only forms a complex with a lipoprotein if the residue after the N-terminal Cys is not an aspartate (The Asp acts as a targeting signal to indicate that the lipoprotein should stay in the inner membrane). This Wigglesworthia glossinidia brevipalpis protein is Outer-membrane lipoprotein carrier protein.